Reading from the N-terminus, the 307-residue chain is Protein FAM76A (307 aa).

2 disordered regions span residues 142–195 and 287–307; these read QRKH…ESIT and KQAA…ITSP. A compositionally biased stretch (polar residues) spans 161–182; it reads SRLSGGSHYNSQKTLSTSSIQN. Residues 217 to 299 adopt a coiled-coil conformation; sequence IIAQLKEEVA…AALSKSKKSE (83 aa).

It belongs to the FAM76 family.

The chain is Protein FAM76A (FAM76A) from Bos taurus (Bovine).